The following is a 529-amino-acid chain: Peptide chain release factor 3 (529 aa).

The 270-residue stretch at Ala11–Gln280 folds into the tr-type G domain. GTP is bound by residues Ser20–Thr27, Asp88–His92, and Asn142–Asp145.

This sequence belongs to the TRAFAC class translation factor GTPase superfamily. Classic translation factor GTPase family. PrfC subfamily.

The protein localises to the cytoplasm. In terms of biological role, increases the formation of ribosomal termination complexes and stimulates activities of RF-1 and RF-2. It binds guanine nucleotides and has strong preference for UGA stop codons. It may interact directly with the ribosome. The stimulation of RF-1 and RF-2 is significantly reduced by GTP and GDP, but not by GMP. This chain is Peptide chain release factor 3, found in Alcanivorax borkumensis (strain ATCC 700651 / DSM 11573 / NCIMB 13689 / SK2).